The chain runs to 298 residues: Putative ankyrin repeat-containing protein TP_0502 (298 aa).

ANK repeat units lie at residues 143–172 (CFEE…SAAL), 176–205 (RGTP…PVDQ), 210–239 (RAYS…DPNV), and 243–272 (NGQT…NPYL).

This Treponema pallidum (strain Nichols) protein is Putative ankyrin repeat-containing protein TP_0502.